The sequence spans 211 residues: RNA chaperone ProQ (211 aa).

The interval 113–147 (RRAVEKANNPKANKKRSVYHSGNKSENKKSAGKKF) is disordered.

It belongs to the ProQ family.

The protein localises to the cytoplasm. Its function is as follows. RNA chaperone with significant RNA binding, RNA strand exchange and RNA duplexing activities. This chain is RNA chaperone ProQ, found in Histophilus somni (strain 129Pt) (Haemophilus somnus).